Here is a 345-residue protein sequence, read N- to C-terminus: Cysteinyl leukotriene receptor 2 (345 aa).

The Extracellular segment spans residues M1 to P43. N-linked (GlcNAc...) asparagine glycosylation is found at N20 and N29. A helical transmembrane segment spans residues I44–F64. Topologically, residues L65 to S73 are cytoplasmic. Residues V74–F94 form a helical membrane-spanning segment. Topologically, residues R95 to Y124 are extracellular. Cysteines 112 and 188 form a disulfide. The chain crosses the membrane as a helical span at residues S125 to F145. Residues R146–K154 lie on the Cytoplasmic side of the membrane. A helical membrane pass occupies residues N155–L175. The Extracellular portion of the chain corresponds to K176 to V205. N-linked (GlcNAc...) asparagine glycans are attached at residues N177 and N184. A helical membrane pass occupies residues A206–I226. Over R227–A246 the chain is Cytoplasmic. A helical transmembrane segment spans residues L247–L267. Topologically, residues R268–A287 are extracellular. Residues V288–F308 form a helical membrane-spanning segment. At A309–V345 the chain is on the cytoplasmic side.

Belongs to the G-protein coupled receptor 1 family.

It is found in the cell membrane. Its function is as follows. Receptor for cysteinyl leukotrienes. The response is mediated via a G-protein that activates a phosphatidylinositol-calcium second messenger system. The polypeptide is Cysteinyl leukotriene receptor 2 (CYSLTR2) (Sus scrofa (Pig)).